A 328-amino-acid chain; its full sequence is Neuronal membrane glycoprotein M6-b (328 aa).

Residues 1-22 (MKPAMETAAEENTEQSQERKVN) are disordered. A helical membrane pass occupies residues 71–91 (GGVPYASLVATILCFSGVALF). The N-linked (GlcNAc...) asparagine glycan is linked to asparagine 113. Helical transmembrane passes span 130-150 (VIYGIASFFFLYGIILLAEGF) and 176-196 (FVFLTYVLGVAWLGVFGFSAV). Asparagine 217 carries N-linked (GlcNAc...) asparagine glycosylation. The helical transmembrane segment at 265–285 (FIVACAGAGATVIALIHFLMI) threads the bilayer. 3 positions are modified to phosphoserine: serine 318, serine 320, and serine 326.

It belongs to the myelin proteolipid protein family. In terms of assembly, interacts with SERT. Widely expressed. In the brain, expressed in neurons and oligodendrocytes.

It localises to the membrane. The protein resides in the cell membrane. May be involved in neural development. Involved in regulation of osteoblast function and bone formation. Involved in matrix vesicle release by osteoblasts; this function seems to involve maintenance of the actin cytoskeleton. May be involved in cellular trafficking of SERT and thereby in regulation of serotonin uptake. This Mus musculus (Mouse) protein is Neuronal membrane glycoprotein M6-b (Gpm6b).